Reading from the N-terminus, the 453-residue chain is Kynureninase (453 aa).

Pyridoxal 5'-phosphate is bound by residues Leu-111, Thr-112, 139–142 (FPSD), Ser-196, Asp-226, His-229, and Tyr-251. The residue at position 252 (Lys-252) is an N6-(pyridoxal phosphate)lysine. Pyridoxal 5'-phosphate contacts are provided by Trp-286 and Asn-314.

The protein belongs to the kynureninase family. Homodimer. The cofactor is pyridoxal 5'-phosphate.

The protein resides in the cytoplasm. It localises to the nucleus. It carries out the reaction L-kynurenine + H2O = anthranilate + L-alanine + H(+). The enzyme catalyses 3-hydroxy-L-kynurenine + H2O = 3-hydroxyanthranilate + L-alanine + H(+). It participates in amino-acid degradation; L-kynurenine degradation; L-alanine and anthranilate from L-kynurenine: step 1/1. It functions in the pathway cofactor biosynthesis; NAD(+) biosynthesis; quinolinate from L-kynurenine: step 2/3. Catalyzes the cleavage of L-kynurenine (L-Kyn) and L-3-hydroxykynurenine (L-3OHKyn) into anthranilic acid (AA) and 3-hydroxyanthranilic acid (3-OHAA), respectively. The polypeptide is Kynureninase (Saccharomyces cerevisiae (strain ATCC 204508 / S288c) (Baker's yeast)).